The chain runs to 197 residues: V-type ATP synthase subunit E 2 (197 aa).

It belongs to the V-ATPase E subunit family.

Its function is as follows. Produces ATP from ADP in the presence of a proton gradient across the membrane. In Clostridium tetani (strain Massachusetts / E88), this protein is V-type ATP synthase subunit E 2.